The sequence spans 410 residues: Mating-type locus allele B3 protein (410 aa).

The segment at 1 to 110 (MSRDPKLSLS…ANVVSPGEGC (110 aa)) is variable domain between B alleles. The homeobox; TALE-type DNA-binding region spans 107-184 (GEGCRNLSED…NARRRSGWSH (78 aa)). The segment at 111-410 (RNLSEDLPAY…PFLCLSVAFV (300 aa)) is highly conserved between B alleles. 2 disordered regions span residues 203-224 (AKLS…PSDD) and 278-335 (TPKP…TPEL). Over residues 205 to 219 (LSSSNQSTPPSLTSE) the composition is skewed to polar residues. Residues 276–308 (KKTPKPGMPRPVTTVAKRHPARKTKPAAKPKSR) carry the Nuclear localization signal motif. Basic residues predominate over residues 291 to 307 (AKRHPARKTKPAAKPKS). Positions 312–335 (PRASTTPSIDSTLDSSKLESTPEL) are enriched in polar residues. Residues 333-410 (PELSMCSTAD…PFLCLSVAFV (78 aa)) are not essential for B3 function.

It belongs to the TALE/M-ATYP homeobox family.

The protein resides in the nucleus. The B locus has at least 25 alleles, and any combination of two different B alleles yields a multimeric regulatory protein, that activates genes responsible for the pathogenicity and for the sexual development of the fungus within the corn plant. The sequence is that of Mating-type locus allele B3 protein from Mycosarcoma maydis (Corn smut fungus).